The sequence spans 2672 residues: eIF-2-alpha kinase activator GCN1 (2672 aa).

11 HEAT repeats span residues 5–42 (LNWE…QETL), 79–117 (NLEP…WINS), 174–211 (CIFQ…YSKL), 227–267 (QAAL…NPPS), 329–366 (FASS…KISN), 372–410 (EDLT…THYE), 509–549 (HGHA…NSSI), 611–648 (KYVT…IFNI), 706–745 (IQPN…EEGV), 902–932 (QDYL…IDSI), and 933–970 (SLTY…EEDE). One copy of the HEAT 12; degenerate repeat lies at 975-994 (LLLAMEIISVHAEAFEDPSI). The HEAT 13; degenerate repeat unit spans residues 995–1030 (PRISIVEVLLSLLSLPSKAKIAKDCFNALCQSISVA). 32 HEAT repeats span residues 1031–1067 (PNQE…LEPF), 1099–1138 (VVND…FTSE), 1185–1224 (STVA…REPI), 1243–1281 (QNSK…HLQQ), 1284–1321 (ARIH…QFKQ), 1363–1401 (LSEF…SLGK), 1405–1442 (PYVI…HTTG), 1444–1480 (GVKK…LDPT), 1484–1521 (ASLS…VIRN), 1523–1559 (EIQK…HYID), 1561–1598 (PSLA…LVDT), 1603–1640 (PYLQ…RLGE), 1641–1679 (EQFP…GLGL), 1681–1717 (KLDE…CFGS), 1721–1758 (PYIN…NYAT), 1760–1796 (AVDL…QVTG), 1825–1862 (DRRD…NTPR), 1863–1903 (AVKE…RVGG), 1905–1942 (ALSQ…SAST), 1947–1984 (QFQS…VVGK), 1985–2024 (TAVD…VIFP), 2026–2055 (LIPT…SALY), 2057–2095 (RLSI…SVND), 2097–2134 (EGLH…KTVL), 2138–2175 (VYIP…KVDK), 2206–2243 (RGPN…KTPA), 2250–2286 (VSVI…KIPM), 2290–2328 (PFIP…HQPR), 2347–2384 (GVKT…EEML), 2392–2429 (VAYA…ETGK), 2450–2487 (GLID…LEGE), and 2506–2546 (ENIN…FKFD). Positions 1330-1641 (LMEKLLNPTV…GALVERLGEE (312 aa)) are EF3-like region. Positions 2207–2356 (GPNCVLPIFL…GVKTAMLKAL (150 aa)) are RWDBD region.

This sequence belongs to the GCN1 family. In terms of assembly, interacts (via N- and C-terminus) with GCN2 (via N-terminal RWD domain); this interaction stimulates GCN2 kinase activity in a GCN20-dependent manner in response to amino acid starvation. Interacts (via C-terminus) with GCN20 (via N-terminus); this interaction stimulates GCN2 kinase activity in response to amino acid starvation. The GCN1-GCN20 complex interacts with GCN2 on translating ribosomes in amino acid-starved cells; GCN1 may bind near the ribosomal A-site and promotes the transfer of uncharged tRNAs from the A-site to the tRNA-binding domain in GCN2 for its subsequent kinase activation, and hence allowing GCN4 translational activation and derepression of amino acid biosynthetic genes. Interacts (via C-terminus) with YIH1 (via N-terminus); this interaction reduces the GCN1-GCN20 complex formation and prevents the interaction of GCN1 with GCN2 and GCN2 kinase activation in amino acid-starved cells. Interacts with GIR2; this interaction prevents the interaction of GCN1 with GCN2 and GCN2 kinase activation in amino acid-starved cells. Interacts (via middle region) with RPS10A and RPS10B; these interactions are direct and promote GCN2 kinase activation. Associates (via N-terminus) with ribosomes; this association is stimulated in a ATP- and GCN20-dependent manner and is necessary to activate GCN2 kinase activity.

Its subcellular location is the cytoplasm. In terms of biological role, ribosome collision sensor that activates a translation quality control pathway when a ribosome has stalled during translation. Directly binds to the ribosome and acts as a sentinel for colliding ribosomes. GCN1 also acts as a positive activator of the integrated stress response (ISR) by mediating activation of GCN2 in response to low amino acid, carbon, or purine availability. Component of the GCN1-GCN20 complex that forms a complex with GCN2 on translating ribosomes: during this process, GCN1 acts as a chaperone to facilitate delivery of uncharged tRNAs that enter the A-site of ribosomes to the tRNA-binding domain of GCN2, and hence stimulating GCN2 kinase activity, leading to phosphorylation of eukaryotic translation initiation factor 2 (eIF-2-alpha/SUI2). eIF-2-alpha/SUI2 phosphorylation converts eIF-2-alpha/SUI2 into a global protein synthesis inhibitor, leading to a global attenuation of cap-dependent translation, and thus to a reduced overall utilization of amino acids, while concomitantly initiating the preferential translation of ISR-specific mRNAs, such as the transcriptional activator GCN4, and hence allowing GCN4-mediated reprogramming of amino acid biosynthetic gene expression to alleviate nutrient depletion. This chain is eIF-2-alpha kinase activator GCN1, found in Saccharomyces cerevisiae (strain ATCC 204508 / S288c) (Baker's yeast).